We begin with the raw amino-acid sequence, 1020 residues long: Phosphatidylinositol 3-kinase VPS34 (1020 aa).

The C2 PI3K-type domain occupies 49-210; the sequence is LSTKFEDPTV…NWLDKMVLPK (162 aa). The PIK helical domain occupies 331 to 577; it reads DKELKPTPQL…DGPIKIYMDI (247 aa). The PI3K/PI4K catalytic domain maps to 666 to 1004; sequence YPEESSVFKS…LINDSVNAFL (339 aa). Positions 672-678 are G-loop; sequence VFKSSLA. Residues 873 to 881 are catalytic loop; sequence GVGDRHLDN. The activation loop stretch occupies residues 892 to 913; that stretch reads HADFGYILGRDPKPFPPLMKLP.

The protein belongs to the PI3/PI4-kinase family. Component of the autophagy-specific VPS34 PI3-kinase complex I composed of at least VPS15, VPS30, VPS34, and of the VPS34 PI3-kinase complex II composed of VPS15, VPS30, VPS34 and VPS38. Interacts with VMNA7. In terms of processing, autophosphorylated.

Its subcellular location is the golgi apparatus. It localises to the trans-Golgi network membrane. The protein resides in the endosome membrane. The enzyme catalyses a 1,2-diacyl-sn-glycero-3-phospho-(1D-myo-inositol) + ATP = a 1,2-diacyl-sn-glycero-3-phospho-(1D-myo-inositol-3-phosphate) + ADP + H(+). Multifunctional phosphatidylinositol 3-kinase involved in acidification of vacuoles, pH-dependent cell growth, and autophagocytosis. Plays an important role in protein transport and virulence. Component of the autophagy-specific VPS34 PI3-kinase complex I essential to recruit the ATG8-phosphatidylinositol conjugate and the ATG12-ATG5 conjugate to the pre-autophagosomal structure. Also involved in endosome-to-Golgi retrograde transport as part of the VPS34 PI3-kinase complex II. This second complex is required for the endosome-to-Golgi retrieval of PEP1 and KEX2, and the recruitment of VPS5 and VPS7, two components of the retromer complex, to endosomal membranes (probably through the synthesis of a specific pool of phosphatidylinositol 3-phosphate recruiting the retromer to the endosomes). Finally, it might also be involved in ethanol tolerance and cell wall integrity. The chain is Phosphatidylinositol 3-kinase VPS34 from Candida albicans (Yeast).